Consider the following 1062-residue polypeptide: Histone H3-lysine(4) N-trimethyltransferase ATX1 (1062 aa).

Residues 159–184 are disordered; it reads NAFSGNKQNGSSRRKGSSSKNQDKAT. The PWWP domain occupies 301-365; it reads PGDIVWAKLA…VKQAISFIKG (65 aa). The interval 401 to 424 is disordered; that stretch reads QLQKGADSVDSDMANSTEEGNSGG. One can recognise an FYR N-terminal domain in the interval 441-500; the sequence is DFRHIIGDLLIINLGKVVTDSQFFKDENHIWPEGYTAMRKFTSLTDHSASALYKMEVLRD. Residues 504 to 586 form the FYR C-terminal domain; sequence KTHPLFIVTA…RPSSHVSMCK (83 aa). The Phorbol-ester/DAG-type zinc finger occupies 591 to 647; sequence RHQNQPTGYRPVRVDWKDLDKCNVCHMDEEYENNLFLQCDKCRMMVHAKCYGELEPC. Residues 599–1062 are interaction with PIP5; it reads YRPVRVDWKD…RCDLIDWTAE (464 aa). A PHD-type 1 zinc finger spans residues 609–660; it reads LDKCNVCHMDEEYENNLFLQCDKCRMMVHAKCYGELEPCDGALWLCNLCRPG. A C2HC pre-PHD-type zinc finger spans residues 665–698; that stretch reads PPRCCLCPVVGGAMKPTTDGRWAHLACAIWIPET. A PHD-type 2 zinc finger spans residues 722 to 785; that stretch reads LMCTICGVSY…RMLSFCKRHR (64 aa). The SET domain maps to 898 to 1016; the sequence is KRLAFGKSGI…KWEELTYDYR (119 aa). H908 contributes to the S-adenosyl-L-methionine binding site. O-linked (GlcNAc) serine glycosylation occurs at S947. S-adenosyl-L-methionine is bound by residues Y954 and 977–978; that span reads NH. Zn(2+) contacts are provided by C980, C1026, C1028, and C1033. The Post-SET domain maps to 1022-1038; the sequence is ERLSCSCGFPGCRGVVN.

It belongs to the class V-like SAM-binding methyltransferase superfamily. Histone-lysine methyltransferase family. TRX/MLL subfamily. Interacts with PIP5. Interacts with WDR5A. Binds to CLF in the nucleus. Interacts with NRPB1 CTD domain, especially when NRPB1 is phosphorylated on 'Ser-5' of the heptapeptide repeat. Component of a nuclear protein complex containing at least TATA binding proteins (TBPs, e.g. TBP1 and TBP2) and ATX1. Associates with ULT1 for trimethylating 'Lys-4' on histone H3 (H3K4me3) at flower MADS box gene loci. Interacts with SEC. As to quaternary structure, interacts with A4/EF1A in the cytoplasm on the nuclear periphery. In terms of processing, activated via O-glycosylation by SEC; this modification triggers FLC locus H3K4me3 histone modification, thus preventing premature flowering. As to expression, strongly expressed in cotyledons, but weak levels in the first true leaves, except at the hydothodes. Ubiquitous with higher levels in dividing tissues, including inflorescence meristem and flower primordia. Expressed also in leaves (especially at hydathodes), in growing inflorescence stems and in the mature flowers. In terms of tissue distribution, strongly expressed in young seedlings.

It is found in the nucleus. The protein localises to the cytoplasm. Its subcellular location is the perinuclear region. It catalyses the reaction L-lysyl(4)-[histone H3] + 3 S-adenosyl-L-methionine = N(6),N(6),N(6)-trimethyl-L-lysyl(4)-[histone H3] + 3 S-adenosyl-L-homocysteine + 3 H(+). It carries out the reaction L-lysyl-[protein] + 3 S-adenosyl-L-methionine = N(6),N(6),N(6)-trimethyl-L-lysyl-[protein] + 3 S-adenosyl-L-homocysteine + 3 H(+). Binds to the promoter and regulates the transcription of target genes, maintaining them in an active state; at promoters, required for TATA binding proteins (TBPs, e.g. TBP1 and TBP2) and RNA polymerase II (Pol II) recruitment, and, in a subsequent event, is recruited by a phosphorylated form of Pol II to the +300-bp region of transcribed sequences to trimethylates nucleosomes. Histone trimethyltransferase that trimethylates 'Lys-4' of histone H3 (H3K4me3); H3 'Lys-4' methylation represents a specific tag for epigenetic transcriptional activation and is required for efficient elongation of transcription but not for transcription initiation. Methylates only a limited fraction of nucleosomes of target genes (e.g. FLC, NAP, XTH33 and WRKY70). Necessary for WDR5A occupancy at WRKY70 and LTP7 genes. Required to maintain the active state of class A (AP1 and AP2), class B (PI and AP3) and class C (AG, AGAMOUS) floral homeotic genes at early stages of flower development. Together with CLF, modulates AG nucleosome methylation statement. Involved in epigenetic regulation (e.g. H3K4me3) of the floral repressors FLC, FT and SOC1 to prevent the transition from vegetative to reproductive development, independently of the photoperiod; binds the active FLC locus before flowering, but this interaction is released upon the transition to flowering. Regulates floral organ identity and flowering transition. Functions as a receptor for the lipid messenger phosphatidylinositol 5-phosphate (PI5P), which negatively regulates its transcriptional activation activity. Exhibits histone methylase activity and subsequent transcriptional regulation on WRKY70 gene, and, to a lower extent on secondary defense-response targets salicylic acid (SA)-responsive gene PR1 and jasmonic acid (JA)-responsive gene THI2.1. Involved in response to dehydration stress-response in both abscisic acid (ABA)-dependent and ABA-independent pathways; this includes specific genes (e.g. COR15A, ADH1, CBF4, RD29A, RD29B, RD26, ABF3, NCED3 and ABA3) epigenetic regulation (e.g. H3K4me3 and Pol II recruitment) to promote their transcription and influence ABA production. Implicated in stomatal closure regulation. Indirect repressor of XTH genes (XTH33). Necessary for the phosphorylation of Pol II NRPB1 (e.g. Ser5P and Ser2P) at the promoters of target genes, thus regulating both early and late stages of transcription. Controls root growth and architecture by regulating the timing of root development, stem cell niche maintenance (e.g. quiescent center (QC)), and cell patterning during primary and lateral root development. Modulates cell cycle duration, cell production, and the transition from cell proliferation in the root apical meristem (RAM) to cell elongation. In terms of biological role, trimethylates A4/EF1A post-translationally at Lys-396. Required for actin cytoskeleton organization. This Arabidopsis thaliana (Mouse-ear cress) protein is Histone H3-lysine(4) N-trimethyltransferase ATX1.